A 617-amino-acid chain; its full sequence is tRNA-dihydrouridine(47) synthase [NAD(P)(+)] (617 aa).

Residues Lys42–Glu70 form a C3H1-type zinc finger. The interval Glu160 to Ser193 is disordered. Residues Pro245–Thr247 and Gln308 contribute to the FMN site. Cys340 acts as the Proton donor in catalysis. FMN-binding positions include Lys380, His411, Asn460–Asp462, and Ala483–Arg484.

This sequence belongs to the Dus family. Dus3 subfamily. FMN is required as a cofactor.

Its subcellular location is the cytoplasm. It is found in the nucleus. It carries out the reaction 5,6-dihydrouridine(47) in tRNA + NAD(+) = uridine(47) in tRNA + NADH + H(+). The enzyme catalyses 5,6-dihydrouridine(47) in tRNA + NADP(+) = uridine(47) in tRNA + NADPH + H(+). The catalysed reaction is a 5,6-dihydrouridine in mRNA + NAD(+) = a uridine in mRNA + NADH + H(+). It catalyses the reaction a 5,6-dihydrouridine in mRNA + NADP(+) = a uridine in mRNA + NADPH + H(+). Functionally, catalyzes the synthesis of dihydrouridine, a modified base, in various RNAs, such as tRNAs and mRNAs. Modifies the uridine in position 47 (U47) in the D-loop of tRNAs. Also able to mediate formation of dihydrouridine outside of the D-loop of tRNAs. Catalyzes the synthesis of dihydrouridine in some mRNAs, thereby affecting their translation. Dus3-mediated dihydrouridylation of the mRNA encoding alpha-tubulin nda2 is required for meiotic chromosome segregation. The protein is tRNA-dihydrouridine(47) synthase [NAD(P)(+)] of Schizosaccharomyces pombe (strain 972 / ATCC 24843) (Fission yeast).